An 849-amino-acid polypeptide reads, in one-letter code: MIAYCGTTTMSDDIDWLHSRRGVCKVDLYSPKGQQDQDRKVICFVDVSTLNVEDKDSKGAAGSRSEGELNLETLEEKEIIVIKDTEKQDQSKTEGSVCLFKQAPSDPISVLNWLLNDLQKYALGFQHALSPSASSCKHKVGDLEGDYSKIPSENCYSVYADQVNFDYLNKGPQNLRLEMAASKNTNNNQSPSNPATKSPSNQRSVATPEGECSMDDLSFYVNRLSSLVIQMARKEIKDKLEGGSKCLHHSMYTSGDKGKTSPRSAVSKIASEMAHEAVELTSSEMRGNGEDCRDGRKTFLYSEMCNKNKCGEKQQMCPKDSKEFADSISKGLMVYANQVASDMMVSVMKTLKVHSCGKPIPACVVLKRVLLKHTKEIVSDLIDSCMKNLHNITGVLMTDSDFVSAVKRNLFNHGKQNAADIMEAMLKRLVSALLGEKKETKSQSLAYATLKAGTNDPKCKNQSLEFSAMKAEMKGKDKCKSKADPCCKSLTSAERVSEHILKESLTMWNNQKQGNQGKVTNKVCCTSKDEKREKISPSTDSLAKDLIVSALMLIQYHLTQQAKGKDPCEEECPGSSMGYMSQSAQYEKCGGGQSSKSLSMKHFETRGAPGPSTCMKENQLESQKMDMSNMVLSLIQKLLSESPFSCDELTESDNKRCCDPRSSKAAPMAKRPEEQCQDNAELDFISGMKQMNRQFIDQLVESVMKLCLIMAKYSNNGAALAELEEQAALVGSGSRCGRDAMMSQNYSETPGPEVIVNNQCSTTNLQKQLQAVLQWIAASQFNVPMLYFMGDDDGQLEKLPEVSAKAAEKGYSVGDLLQEVMKFAKERQLDEAVGNMARKQLLDWLLANL.

Residues 1–188 (MIAYCGTTTM…MAASKNTNNN (188 aa)) constitute a propeptide that is removed on maturation. A phosphoserine mark is found at S96, S130, S190, and S204. The span at 183–205 (KNTNNNQSPSNPATKSPSNQRSV) shows a compositional bias: polar residues. Residues 183–210 (KNTNNNQSPSNPATKSPSNQRSVATPEG) form a disordered region. The residue at position 207 (T207) is a Phosphothreonine. Phosphoserine occurs at positions 213, 226, and 271. Residues 219 to 232 (FYVNRLSSLVIQMA) are PKA-RI and PKA-RII subunit binding domain. Y301 carries the post-translational modification Phosphotyrosine. Residues S302, S341, S431, S442, S444, S463, S492, S497, and S504 each carry the phosphoserine modification. Residues 335–344 (YANQVASDMM) form a PKA-RI-alpha subunit binding domain region. Phosphothreonine is present on T506. At S538 the chain carries Phosphoserine. At S583 the chain carries Phosphoserine; by STK33. S628, S633, S652, and S702 each carry phosphoserine.

Belongs to the AKAP110 family. Interacts with PRKAR1A and PRKAR2A. Interacts with ENO4. Interacts with QRICH2. In terms of processing, phosphorylated by STK33 during sperm flagella assembly. As to expression, expressed in the fibrous sheath of spermatozoa (at protein level). Expressed in step 1 to step 6 spermatids, abundance then increases during steps 8 to 12, abundance decreases thereafter.

It is found in the cell projection. Its subcellular location is the cilium. The protein localises to the flagellum. Its function is as follows. Major structural component of sperm fibrous sheath. Plays a role in sperm motility. This Mus musculus (Mouse) protein is A-kinase anchor protein 4.